The chain runs to 224 residues: 7-cyano-7-deazaguanine synthase (224 aa).

10-20 (LSGGLDSATVV) contacts ATP. Positions 189, 199, 202, and 205 each coordinate Zn(2+).

Belongs to the QueC family. Zn(2+) serves as cofactor.

It carries out the reaction 7-carboxy-7-deazaguanine + NH4(+) + ATP = 7-cyano-7-deazaguanine + ADP + phosphate + H2O + H(+). The protein operates within purine metabolism; 7-cyano-7-deazaguanine biosynthesis. Its function is as follows. Catalyzes the ATP-dependent conversion of 7-carboxy-7-deazaguanine (CDG) to 7-cyano-7-deazaguanine (preQ(0)). The protein is 7-cyano-7-deazaguanine synthase of Pseudomonas fluorescens (strain SBW25).